The chain runs to 412 residues: 4-hydroxy-3-methylbut-2-en-1-yl diphosphate synthase (ferredoxin) (412 aa).

The span at 1–12 (MQTLDRPNAPSQ) shows a compositional bias: polar residues. The interval 1–22 (MQTLDRPNAPSQQPYPEPVYPR) is disordered. [4Fe-4S] cluster contacts are provided by C314, C317, C348, and E355.

It belongs to the IspG family. It depends on [4Fe-4S] cluster as a cofactor.

The enzyme catalyses (2E)-4-hydroxy-3-methylbut-2-enyl diphosphate + 2 oxidized [2Fe-2S]-[ferredoxin] + H2O = 2-C-methyl-D-erythritol 2,4-cyclic diphosphate + 2 reduced [2Fe-2S]-[ferredoxin] + H(+). It participates in isoprenoid biosynthesis; isopentenyl diphosphate biosynthesis via DXP pathway; isopentenyl diphosphate from 1-deoxy-D-xylulose 5-phosphate: step 5/6. Its function is as follows. Converts 2C-methyl-D-erythritol 2,4-cyclodiphosphate (ME-2,4cPP) into 1-hydroxy-2-methyl-2-(E)-butenyl 4-diphosphate. The chain is 4-hydroxy-3-methylbut-2-en-1-yl diphosphate synthase (ferredoxin) from Synechococcus sp. (strain JA-3-3Ab) (Cyanobacteria bacterium Yellowstone A-Prime).